The primary structure comprises 590 residues: L-erythrulose kinase (590 aa).

A DhaK domain is found at 7–331 (QPSSFARELT…WRAPADAPAF (325 aa)). Histidine 217 acts as the Tele-hemiaminal-histidine intermediate in catalysis. One can recognise a DhaL domain in the interval 366 to 568 (HCVAAALNAA…LAMILDAVSA (203 aa)). ADP-binding positions include 398 to 401 (HGIG), 441 to 442 (TS), glycine 483, arginine 540, and 553 to 555 (DAG).

The catalysed reaction is L-erythrulose + ATP = L-erythrulose 1-phosphate + ADP + H(+). Its pathway is carbohydrate metabolism. Involved in catabolism of D-apiose. Catalyzes the phosphorylation of L-erythrulose to L-erythrulose 1-phosphate. Can also phosphorylate D-erythrulose and dihydroxyacetone in vitro. This is L-erythrulose kinase from Pectobacterium atrosepticum (strain SCRI 1043 / ATCC BAA-672) (Erwinia carotovora subsp. atroseptica).